The following is a 145-amino-acid chain: Large ribosomal subunit protein uL15 (145 aa).

The segment at 1–50 is disordered; sequence MLHTIKPVANARKTTKRLGRGPGSGTGKTSGKGHKGQLARSGKTLRPGFE. The span at 20–30 shows a compositional bias: gly residues; sequence RGPGSGTGKTS.

Belongs to the universal ribosomal protein uL15 family. Part of the 50S ribosomal subunit.

Functionally, binds to the 23S rRNA. In Phytoplasma australiense, this protein is Large ribosomal subunit protein uL15.